The following is a 165-amino-acid chain: Coronafacic acid dehydratase (165 aa).

His62 is an active-site residue.

This sequence belongs to the thioester dehydratase family.

It functions in the pathway phytotoxin biosynthesis; coronatine biosynthesis. This chain is Coronafacic acid dehydratase (cfa2), found in Pseudomonas savastanoi pv. glycinea (Pseudomonas syringae pv. glycinea).